A 220-amino-acid polypeptide reads, in one-letter code: Deoxyribose-phosphate aldolase (220 aa).

Aspartate 89 (proton donor/acceptor) is an active-site residue. The active-site Schiff-base intermediate with acetaldehyde is the lysine 151. Catalysis depends on lysine 180, which acts as the Proton donor/acceptor.

It belongs to the DeoC/FbaB aldolase family. DeoC type 1 subfamily.

It is found in the cytoplasm. It catalyses the reaction 2-deoxy-D-ribose 5-phosphate = D-glyceraldehyde 3-phosphate + acetaldehyde. The protein operates within carbohydrate degradation; 2-deoxy-D-ribose 1-phosphate degradation; D-glyceraldehyde 3-phosphate and acetaldehyde from 2-deoxy-alpha-D-ribose 1-phosphate: step 2/2. Its function is as follows. Catalyzes a reversible aldol reaction between acetaldehyde and D-glyceraldehyde 3-phosphate to generate 2-deoxy-D-ribose 5-phosphate. In Streptococcus pneumoniae serotype 19F (strain G54), this protein is Deoxyribose-phosphate aldolase.